Consider the following 215-residue polypeptide: tRNA (guanine-N(7)-)-methyltransferase (215 aa).

Residues D43, E68, N95, and D121 each contribute to the S-adenosyl-L-methionine site. Residue D121 is part of the active site. Substrate-binding residues include K125 and D157.

It belongs to the class I-like SAM-binding methyltransferase superfamily. TrmB family.

It catalyses the reaction guanosine(46) in tRNA + S-adenosyl-L-methionine = N(7)-methylguanosine(46) in tRNA + S-adenosyl-L-homocysteine. It functions in the pathway tRNA modification; N(7)-methylguanine-tRNA biosynthesis. Its function is as follows. Catalyzes the formation of N(7)-methylguanine at position 46 (m7G46) in tRNA. The sequence is that of tRNA (guanine-N(7)-)-methyltransferase from Trichormus variabilis (strain ATCC 29413 / PCC 7937) (Anabaena variabilis).